We begin with the raw amino-acid sequence, 235 residues long: Phosphoribosylformylglycinamidine synthase subunit PurQ (235 aa).

The Glutamine amidotransferase type-1 domain occupies 3–234; that stretch reads FGVLVFPGSN…LNSLMAQGVT (232 aa). Cysteine 86 acts as the Nucleophile in catalysis. Active-site residues include histidine 203 and glutamate 205.

As to quaternary structure, part of the FGAM synthase complex composed of 1 PurL, 1 PurQ and 2 PurS subunits.

The protein resides in the cytoplasm. The catalysed reaction is N(2)-formyl-N(1)-(5-phospho-beta-D-ribosyl)glycinamide + L-glutamine + ATP + H2O = 2-formamido-N(1)-(5-O-phospho-beta-D-ribosyl)acetamidine + L-glutamate + ADP + phosphate + H(+). It carries out the reaction L-glutamine + H2O = L-glutamate + NH4(+). It participates in purine metabolism; IMP biosynthesis via de novo pathway; 5-amino-1-(5-phospho-D-ribosyl)imidazole from N(2)-formyl-N(1)-(5-phospho-D-ribosyl)glycinamide: step 1/2. Part of the phosphoribosylformylglycinamidine synthase complex involved in the purines biosynthetic pathway. Catalyzes the ATP-dependent conversion of formylglycinamide ribonucleotide (FGAR) and glutamine to yield formylglycinamidine ribonucleotide (FGAM) and glutamate. The FGAM synthase complex is composed of three subunits. PurQ produces an ammonia molecule by converting glutamine to glutamate. PurL transfers the ammonia molecule to FGAR to form FGAM in an ATP-dependent manner. PurS interacts with PurQ and PurL and is thought to assist in the transfer of the ammonia molecule from PurQ to PurL. This is Phosphoribosylformylglycinamidine synthase subunit PurQ from Acaryochloris marina (strain MBIC 11017).